The following is a 188-amino-acid chain: PRA1 family protein 3 (188 aa).

Position 1 is an N-acetylmethionine (methionine 1). Residues methionine 1–arginine 35 lie on the Cytoplasmic side of the membrane. A run of 2 helical transmembrane segments spans residues valine 36–serine 56 and valine 57–phenylalanine 77. The Cytoplasmic segment spans residues threonine 78–methionine 93. 2 helical membrane passes run lysine 94–serine 114 and leucine 115–isoleucine 135. Positions methionine 103–glycine 117 are required for homodimer formation and heterodimer formation with ARL6IP1. Residues histidine 136 to glutamate 188 lie on the Cytoplasmic side of the membrane. The targeting to endoplasmic reticulum membrane stretch occupies residues histidine 136–glutamate 188.

It belongs to the PRA1 family. Homodimer. Heterodimer with ARL6IP1. Forms multimers. Interacts with ARL6. Interacts with prenylated RAB1A and RAB3A. Interacts with SLC1A1/EAAC1. Interacts with RTN2 (via first transmembrane domain). Does not interact with VAMP1, VAMP2 or VAMP3.

It localises to the endoplasmic reticulum membrane. The protein resides in the cell membrane. The protein localises to the cytoplasm. Its subcellular location is the cytoskeleton. Its function is as follows. Regulates intracellular concentrations of taurine and glutamate. Negatively modulates SLC1A1/EAAC1 glutamate transport activity by decreasing its affinity for glutamate in a PKC activity-dependent manner. Plays a role in the retention of SLC1A1/EAAC1 in the endoplasmic reticulum. This Bos taurus (Bovine) protein is PRA1 family protein 3 (ARL6IP5).